The chain runs to 54 residues: Small polypeptide DEVIL 12 (54 aa).

The segment at 20–51 is required for DVL/RTFL small polypeptide activity; the sequence is NNKLTPNRSLKETRSRLYIIRRCLVMLLCWRE. The N-linked (GlcNAc...) asparagine glycan is linked to Asn26. Residues 31–48 form a helical membrane-spanning segment; it reads ETRSRLYIIRRCLVMLLC.

It belongs to the DVL/RTFL small polypeptides family.

The protein localises to the cell membrane. Functionally, small polypeptide acting as a regulatory molecule which coordinates cellular responses required for differentiation, growth and development, probably by restricting polar cell proliferation in lateral organs and coordinating socket cell recruitment and differentiation at trichome sites. In Arabidopsis thaliana (Mouse-ear cress), this protein is Small polypeptide DEVIL 12.